The following is a 364-amino-acid chain: N-acetyl-gamma-glutamyl-phosphate reductase (364 aa).

The active site involves Cys-157.

The protein belongs to the NAGSA dehydrogenase family. Type 1 subfamily.

It localises to the cytoplasm. The catalysed reaction is N-acetyl-L-glutamate 5-semialdehyde + phosphate + NADP(+) = N-acetyl-L-glutamyl 5-phosphate + NADPH + H(+). The protein operates within amino-acid biosynthesis; L-arginine biosynthesis; N(2)-acetyl-L-ornithine from L-glutamate: step 3/4. Its function is as follows. Catalyzes the NADPH-dependent reduction of N-acetyl-5-glutamyl phosphate to yield N-acetyl-L-glutamate 5-semialdehyde. The chain is N-acetyl-gamma-glutamyl-phosphate reductase from Bifidobacterium longum (strain DJO10A).